A 143-amino-acid chain; its full sequence is UPF0299 membrane protein CGSHiEE_04225 (143 aa).

4 consecutive transmembrane segments (helical) span residues 1 to 21, 33 to 52, 60 to 80, and 92 to 112; these read MIQK…MLSL, VPGS…TRVI, GASL…VGII, and ILLV…GFLG.

This sequence belongs to the UPF0299 family.

The protein resides in the cell inner membrane. This is UPF0299 membrane protein CGSHiEE_04225 from Haemophilus influenzae (strain PittEE).